Consider the following 54-residue polypeptide: UPF0391 membrane protein RC1_1636 (54 aa).

Helical transmembrane passes span 3–23 (YWAL…FGGI) and 30–50 (IAQI…IMGL).

The protein belongs to the UPF0391 family.

The protein localises to the cell membrane. This chain is UPF0391 membrane protein RC1_1636, found in Rhodospirillum centenum (strain ATCC 51521 / SW).